We begin with the raw amino-acid sequence, 278 residues long: 2-dehydro-3-deoxyphosphooctonate aldolase (278 aa).

This sequence belongs to the KdsA family.

It is found in the cytoplasm. The enzyme catalyses D-arabinose 5-phosphate + phosphoenolpyruvate + H2O = 3-deoxy-alpha-D-manno-2-octulosonate-8-phosphate + phosphate. It functions in the pathway carbohydrate biosynthesis; 3-deoxy-D-manno-octulosonate biosynthesis; 3-deoxy-D-manno-octulosonate from D-ribulose 5-phosphate: step 2/3. The protein operates within bacterial outer membrane biogenesis; lipopolysaccharide biosynthesis. This is 2-dehydro-3-deoxyphosphooctonate aldolase from Fusobacterium nucleatum subsp. nucleatum (strain ATCC 25586 / DSM 15643 / BCRC 10681 / CIP 101130 / JCM 8532 / KCTC 2640 / LMG 13131 / VPI 4355).